A 121-amino-acid polypeptide reads, in one-letter code: Small ribosomal subunit protein uS13 (121 aa).

The disordered stretch occupies residues 88–121 (GMRHRRGLPTRGQNTKNNARTRKGPAKSIAGKKK). Residues 106-121 (ARTRKGPAKSIAGKKK) are compositionally biased toward basic residues.

Belongs to the universal ribosomal protein uS13 family. In terms of assembly, part of the 30S ribosomal subunit. Forms a loose heterodimer with protein S19. Forms two bridges to the 50S subunit in the 70S ribosome.

Located at the top of the head of the 30S subunit, it contacts several helices of the 16S rRNA. In the 70S ribosome it contacts the 23S rRNA (bridge B1a) and protein L5 of the 50S subunit (bridge B1b), connecting the 2 subunits; these bridges are implicated in subunit movement. Contacts the tRNAs in the A and P-sites. The polypeptide is Small ribosomal subunit protein uS13 (Lactococcus lactis subsp. cremoris (strain MG1363)).